We begin with the raw amino-acid sequence, 119 residues long: Holo-[acyl-carrier-protein] synthase (119 aa).

Mg(2+) is bound by residues D5 and E51.

Belongs to the P-Pant transferase superfamily. AcpS family. Mg(2+) serves as cofactor.

It localises to the cytoplasm. It catalyses the reaction apo-[ACP] + CoA = holo-[ACP] + adenosine 3',5'-bisphosphate + H(+). In terms of biological role, transfers the 4'-phosphopantetheine moiety from coenzyme A to a Ser of acyl-carrier-protein. This chain is Holo-[acyl-carrier-protein] synthase, found in Helicobacter pylori (strain G27).